A 199-amino-acid chain; its full sequence is Putative 3-methyladenine DNA glycosylase (199 aa).

Belongs to the DNA glycosylase MPG family.

In Rhizobium etli (strain ATCC 51251 / DSM 11541 / JCM 21823 / NBRC 15573 / CFN 42), this protein is Putative 3-methyladenine DNA glycosylase.